The sequence spans 414 residues: Gamma-glutamyl phosphate reductase (414 aa).

The protein belongs to the gamma-glutamyl phosphate reductase family.

It localises to the cytoplasm. The enzyme catalyses L-glutamate 5-semialdehyde + phosphate + NADP(+) = L-glutamyl 5-phosphate + NADPH + H(+). It participates in amino-acid biosynthesis; L-proline biosynthesis; L-glutamate 5-semialdehyde from L-glutamate: step 2/2. Catalyzes the NADPH-dependent reduction of L-glutamate 5-phosphate into L-glutamate 5-semialdehyde and phosphate. The product spontaneously undergoes cyclization to form 1-pyrroline-5-carboxylate. The polypeptide is Gamma-glutamyl phosphate reductase (Geobacillus kaustophilus (strain HTA426)).